Consider the following 254-residue polypeptide: Sugar fermentation stimulation protein homolog (254 aa).

It belongs to the SfsA family.

This Synechococcus sp. (strain CC9605) protein is Sugar fermentation stimulation protein homolog.